A 184-amino-acid polypeptide reads, in one-letter code: NADH-dependent flavin reductase subunit 2 (184 aa).

It belongs to the NADH-dependent flavin reductase family. In terms of assembly, requires LJ_0548 for activity, but the exact composition of the enzyme is unclear.

It catalyses the reaction a reduced flavin + NAD(+) = an oxidized flavin + NADH + 2 H(+). In terms of biological role, component of an enzyme that catalyzes the reduction of free flavins (FMN, FAD and riboflavin) by NADH; the reduced flavins produced by this reaction likely spontaneously react with oxygen, yielding hydrogen peroxide. Is responsible for the major H(2)O(2) production in L.johnsonii in the presence of oxygen. Cannot use NADPH instead of NADH as the electron donor. The protein is NADH-dependent flavin reductase subunit 2 (nfr2) of Lactobacillus johnsonii (strain CNCM I-12250 / La1 / NCC 533).